Reading from the N-terminus, the 246-residue chain is Small ribosomal subunit protein uS3A (246 aa).

Positions 21-92 (LNEFLTRELA…SVELYAEKVA (72 aa)) constitute a KH type-2 domain. Residues 215–246 (DEIVPTTPISEQKAAKPDQPQPPAMPQPVATA) form a disordered region.

This sequence belongs to the universal ribosomal protein uS3 family.

The protein resides in the cytoplasm. Its subcellular location is the nucleus. It is found in the nucleolus. The protein localises to the mitochondrion inner membrane. It localises to the cytoskeleton. The protein resides in the spindle. The enzyme catalyses 2'-deoxyribonucleotide-(2'-deoxyribose 5'-phosphate)-2'-deoxyribonucleotide-DNA = a 3'-end 2'-deoxyribonucleotide-(2,3-dehydro-2,3-deoxyribose 5'-phosphate)-DNA + a 5'-end 5'-phospho-2'-deoxyribonucleoside-DNA + H(+). Its function is as follows. Component of the small ribosomal subunit. The ribosome is a large ribonucleoprotein complex responsible for the synthesis of proteins in the cell. Has endonuclease activity and plays a role in repair of damaged DNA. Also involved in other processes including regulation of transcription, translation of its cognate mRNA, spindle formation and chromosome movement during mitosis, and apoptosis. This Xenopus laevis (African clawed frog) protein is Small ribosomal subunit protein uS3A (rps3-a).